We begin with the raw amino-acid sequence, 88 residues long: Arminin 1a (88 aa).

Residues 1-18 (MKTVLAFLFLPFIAFTHA) form the signal peptide. A propeptide spanning residues 19–57 (ESYEDVKEEIKNEAEKEIFEDLEEESDALDSSVREFNDA) is cleaved from the precursor. Val-85 is modified (valine amide).

It belongs to the arminin family. Expressed in entodermal epithelium along the body column.

It is found in the secreted. The protein resides in the target cell membrane. In terms of biological role, antimicrobial peptide with a broad-spectrum antimicrobial activity. Shows very strong bactericidal activity against B.megaterium (MBC=0.1 uM), E.coli (MBC=0.2 uM), S.aureus (MBC=0.4 uM), methicillin-resistant S.aureus (MRSA) (MBC=0.4-0.8 uM), vancomycin-resistant enterococci (VRE) (E.faecalis (MBC=1.6 uM), and E.faecium (MBC=0.4-0.8 uM)), and extended-spectrum beta-lactamase (ESBL)-producing enterobacteriaceae strains (K.pneumoniae (MBC=0.4-0.8 uM), E.coli (MBC=0.2-0.4 uM)). Keeps its antibacterial activity under a wide range of salt concentrations that mimic physiological conditions of human blood, which is surprising, since Hydra is an obligate freshwater animal with nearly no salt tolerance. Does not affect red blood cells. This is Arminin 1a from Hydra vulgaris (Hydra).